We begin with the raw amino-acid sequence, 138 residues long: Flavodoxin (138 aa).

In terms of domain architecture, Flavodoxin-like spans 1–136 (MKIVYWSGTG…DCIEFGKKIA (136 aa)).

Belongs to the flavodoxin family. FMN is required as a cofactor.

In terms of biological role, low-potential electron donor to a number of redox enzymes. The chain is Flavodoxin from Clostridium beijerinckii (Clostridium MP).